A 98-amino-acid polypeptide reads, in one-letter code: MALTKAEMSEYLFEKLGLSKRDAKELVELFFEEVRRALENGEQVKLSGFGNFDLRDKNQRPGRNPKTGEDIPITARRVVTFRPGQKLKSRVENASPKE.

Residues 49–71 (FGNFDLRDKNQRPGRNPKTGEDI) form a disordered region.

It belongs to the bacterial histone-like protein family. Heterodimer of an alpha and a beta chain.

In terms of biological role, this protein is one of the two subunits of integration host factor, a specific DNA-binding protein that functions in genetic recombination as well as in transcriptional and translational control. This Pectobacterium atrosepticum (strain SCRI 1043 / ATCC BAA-672) (Erwinia carotovora subsp. atroseptica) protein is Integration host factor subunit alpha.